A 141-amino-acid chain; its full sequence is ATP synthase epsilon chain (141 aa).

The protein belongs to the ATPase epsilon chain family. F-type ATPases have 2 components, CF(1) - the catalytic core - and CF(0) - the membrane proton channel. CF(1) has five subunits: alpha(3), beta(3), gamma(1), delta(1), epsilon(1). CF(0) has three main subunits: a, b and c.

It localises to the cell inner membrane. In terms of biological role, produces ATP from ADP in the presence of a proton gradient across the membrane. This Bordetella avium (strain 197N) protein is ATP synthase epsilon chain.